The sequence spans 321 residues: MTQPLRIIFAGTPDFAARHLQALIQSEHQIVGVYSQPDRPAGRGKKLKASEVKELALEHNLPVFQPQSLKTEDALNELTRLNADIMIVVAYGLILPKAILDAPRLGCLNVHGSILPRWRGAAPIQRAIWAGDEQTGVTIMQMNEGLDTGDMLHISRCPISATETSASLYTKLADLGPGALIDTINNLANGKITPEPQNDAAANYAKKLSKDEANIDWSMSAAQIERNIRAFNPWPVCFTQMGGQPVKIYQAHVVEQSSSQPDNNGRVLSSDKNGVIVGCGEHALCITQLQPQGKKPMAINDFLNGRSDWVTPGTILGENNE.

Ser113–Pro116 lines the (6S)-5,6,7,8-tetrahydrofolate pocket.

Belongs to the Fmt family.

It carries out the reaction L-methionyl-tRNA(fMet) + (6R)-10-formyltetrahydrofolate = N-formyl-L-methionyl-tRNA(fMet) + (6S)-5,6,7,8-tetrahydrofolate + H(+). Functionally, attaches a formyl group to the free amino group of methionyl-tRNA(fMet). The formyl group appears to play a dual role in the initiator identity of N-formylmethionyl-tRNA by promoting its recognition by IF2 and preventing the misappropriation of this tRNA by the elongation apparatus. The polypeptide is Methionyl-tRNA formyltransferase (Pseudoalteromonas translucida (strain TAC 125)).